A 359-amino-acid polypeptide reads, in one-letter code: Probable S-adenosylmethionine-dependent methyltransferase At5g38100 (359 aa).

Residues Tyr19, Cys63, Asn68, Asp104, Ser133, and Phe134 each coordinate S-adenosyl-L-homocysteine. Positions 172, 258, and 260 each coordinate Mg(2+).

It belongs to the methyltransferase superfamily. Type-7 methyltransferase family. Homodimer. Mg(2+) serves as cofactor.

This Arabidopsis thaliana (Mouse-ear cress) protein is Probable S-adenosylmethionine-dependent methyltransferase At5g38100.